Consider the following 432-residue polypeptide: Phosphomethylpyrimidine synthase (432 aa).

Substrate-binding positions include Asn66, Met95, Tyr124, His163, 185-187 (SRG), 226-229 (DGLR), and Glu265. His269 contributes to the Zn(2+) binding site. Residue Tyr292 participates in substrate binding. His333 provides a ligand contact to Zn(2+). [4Fe-4S] cluster-binding residues include Cys409, Cys412, and Cys416.

It belongs to the ThiC family. [4Fe-4S] cluster is required as a cofactor.

The catalysed reaction is 5-amino-1-(5-phospho-beta-D-ribosyl)imidazole + S-adenosyl-L-methionine = 4-amino-2-methyl-5-(phosphooxymethyl)pyrimidine + CO + 5'-deoxyadenosine + formate + L-methionine + 3 H(+). It functions in the pathway cofactor biosynthesis; thiamine diphosphate biosynthesis. Catalyzes the synthesis of the hydroxymethylpyrimidine phosphate (HMP-P) moiety of thiamine from aminoimidazole ribotide (AIR) in a radical S-adenosyl-L-methionine (SAM)-dependent reaction. In Moorella thermoacetica (strain ATCC 39073 / JCM 9320), this protein is Phosphomethylpyrimidine synthase.